We begin with the raw amino-acid sequence, 103 residues long: Large ribosomal subunit protein bL21 (103 aa).

It belongs to the bacterial ribosomal protein bL21 family. In terms of assembly, part of the 50S ribosomal subunit. Contacts protein L20.

Its function is as follows. This protein binds to 23S rRNA in the presence of protein L20. This Haemophilus influenzae (strain ATCC 51907 / DSM 11121 / KW20 / Rd) protein is Large ribosomal subunit protein bL21.